The following is a 311-amino-acid chain: CARD domain-containing protein E10 (311 aa).

Residues 21–110 enclose the CARD domain; sequence IWDVERLCLE…EHLVDLLERA (90 aa). Disordered regions lie at residues 125–181, 203–230, and 243–311; these read ESGA…GGVY, GAGR…GGRD, and IPEP…FFCC. Over residues 140 to 152 the composition is skewed to polar residues; the sequence is EDNSGYTALLPTN. Residues 252 to 272 show a composition bias toward gly residues; it reads SGGGGRGGGVRYDAGGDGRLG.

Its subcellular location is the host cell membrane. In terms of biological role, activates host NF-kappa-B and JNK pathways. Induces hyperphosphorylation and redistribution of host bcl-10 from the cytoplasm to the plasma membrane. The inhibitory effect of cellular bcl-10 on NF-kappa-B pathway is then overcome allowing NF-kappa-B activation. This Equus caballus (Horse) protein is CARD domain-containing protein E10 (E10).